The sequence spans 651 residues: Endoplasmic reticulum chaperone BiP (651 aa).

An N-terminal signal peptide occupies residues 1 to 20 (MGLSTYVGIFLLCILTLSRC). Residues 36 to 39 (GTTY), Lys-96, 226 to 228 (GGT), 292 to 299 (EKAKRTLS), and 363 to 366 (GSTR) each bind ATP. Residues 125-279 (KPYMKVQVGS…KKKEGKDITK (155 aa)) are nucleotide-binding (NBD). The tract at residues 399–499 (VQAGVISGVE…PRGLPQIEVT (101 aa)) is substrate-binding (SBD). The short motif at 648–651 (KEEL) is the Prevents secretion from ER element.

This sequence belongs to the heat shock protein 70 family.

It is found in the endoplasmic reticulum lumen. It catalyses the reaction ATP + H2O = ADP + phosphate + H(+). Its activity is regulated as follows. The chaperone activity is regulated by ATP-induced allosteric coupling of the nucleotide-binding (NBD) and substrate-binding (SBD) domains. In the ADP-bound and nucleotide-free (apo) states, the two domains have little interaction. In contrast, in the ATP-bound state the two domains are tightly coupled, which results in drastically accelerated kinetics in both binding and release of polypeptide substrates. J domain-containing co-chaperones stimulate the ATPase activity and are required for efficient substrate recognition. Endoplasmic reticulum chaperone that plays a key role in protein folding and quality control in the endoplasmic reticulum lumen. Involved in the correct folding of proteins and degradation of misfolded proteins. Acts as a key repressor of the unfolded protein response (UPR). This Echinococcus granulosus (Hydatid tapeworm) protein is Endoplasmic reticulum chaperone BiP.